The primary structure comprises 499 residues: Aldehyde dehydrogenase 1 (499 aa).

NAD(+) contacts are provided by residues 164–166, 164–167, 190–193, 223–224, 243–244, 243–248, and 266–268; these read IPW, IPWN, KPAE, GS, GSTKVG, and ELG. The active-site Proton acceptor is the E266. Residue C300 is the Nucleophile of the active site. NAD(+) contacts are provided by residues 346-350 and 397-399; these read QQYEK and EIF.

Belongs to the aldehyde dehydrogenase family. Homotetramer. As to expression, expressed in flowers and disk florets.

It carries out the reaction an aldehyde + NAD(+) + H2O = a carboxylate + NADH + 2 H(+). The enzyme catalyses an aldehyde + NADP(+) + H2O = a carboxylate + NADPH + 2 H(+). It catalyses the reaction octanal + NADP(+) + H2O = octanoate + NADPH + 2 H(+). The catalysed reaction is (1R,3R)-chrysanthemal + NAD(+) + H2O = (1R,3R)-chrysanthemate + NADH + 2 H(+). It carries out the reaction (1R,3R)-chrysanthemal + NADP(+) + H2O = (1R,3R)-chrysanthemate + NADPH + 2 H(+). The enzyme catalyses (E)-hept-2-enal + NADP(+) + H2O = (E)-hept-2-enoate + NADPH + 2 H(+). It catalyses the reaction dodecanal + NADP(+) + H2O = dodecanoate + NADPH + 2 H(+). The catalysed reaction is citral + NADP(+) + H2O = 3,7-dimethylocta-2,6-dienoate + NADPH + 2 H(+). It carries out the reaction perillyl aldehyde + NADP(+) + H2O = perillate + NADPH + 2 H(+). The enzyme catalyses (2E,6E)-farnesal + NADP(+) + H2O = (2E,6E)-farnesoate + NADPH + 2 H(+). It catalyses the reaction (S)-(-)-citronellal + NADP(+) + H2O = (S)-(-)-citronellate + NADPH + 2 H(+). Its pathway is isoprenoid biosynthesis. In terms of biological role, component of the monoterpenoid pyrethrins biosynthesis; pyrethrins are widely used plant-derived pesticide. Mediates the conversion of trans-chrysanthemal into trans-chrysanthemic acid. Can also use octanal, hept-2-enal, dodecanal, citral, farnesal, citronellal and perillyl aldehyde as substrates. This is Aldehyde dehydrogenase 1 from Tanacetum cinerariifolium (Dalmatian daisy).